We begin with the raw amino-acid sequence, 143 residues long: Flagellar assembly factor FliW (143 aa).

It belongs to the FliW family. As to quaternary structure, interacts with translational regulator CsrA and flagellin(s).

The protein localises to the cytoplasm. Acts as an anti-CsrA protein, binds CsrA and prevents it from repressing translation of its target genes, one of which is flagellin. Binds to flagellin and participates in the assembly of the flagellum. The polypeptide is Flagellar assembly factor FliW (Clostridium novyi (strain NT)).